Here is a 207-residue protein sequence, read N- to C-terminus: MLECENLSCTRNNKVLFKNLSFKAELKSKILITGPNGSGKTSLIRSLSGLLPPVSGNIRHCGKDIYDDPKSYISSMVYIGHKNACKDSLTVAQNVEFWAGIRNTRELIVAAICCLQLQPVLNIRYGELSAGWKRRVALARLLISNANVWLIDEPFCNLDSATCELVLNLISIRSEQNGIVIITGHSSTEQLCDFTTIDIRNFNRLLV.

One can recognise an ABC transporter domain in the interval 2–204 (LECENLSCTR…TTIDIRNFNR (203 aa)). 34-41 (GPNGSGKT) lines the ATP pocket.

Belongs to the ABC transporter superfamily. CcmA exporter (TC 3.A.1.107) family. The complex is composed of two ATP-binding proteins (CcmA) and two transmembrane proteins (CcmB).

The protein resides in the cell membrane. The enzyme catalyses heme b(in) + ATP + H2O = heme b(out) + ADP + phosphate + H(+). In terms of biological role, part of the ABC transporter complex CcmAB involved in the biogenesis of c-type cytochromes; once thought to export heme, this seems not to be the case, but its exact role is uncertain. Responsible for energy coupling to the transport system. This chain is Cytochrome c biogenesis ATP-binding export protein CcmA, found in Wolbachia pipientis wMel.